Consider the following 174-residue polypeptide: NADH-quinone oxidoreductase subunit C (174 aa).

The protein belongs to the complex I 30 kDa subunit family. In terms of assembly, NDH-1 is composed of 14 different subunits. Subunits NuoB, C, D, E, F, and G constitute the peripheral sector of the complex.

The protein resides in the cell membrane. It carries out the reaction a quinone + NADH + 5 H(+)(in) = a quinol + NAD(+) + 4 H(+)(out). Functionally, NDH-1 shuttles electrons from NADH, via FMN and iron-sulfur (Fe-S) centers, to quinones in the respiratory chain. The immediate electron acceptor for the enzyme in this species is believed to be ubiquinone. Couples the redox reaction to proton translocation (for every two electrons transferred, four hydrogen ions are translocated across the cytoplasmic membrane), and thus conserves the redox energy in a proton gradient. In Roseiflexus castenholzii (strain DSM 13941 / HLO8), this protein is NADH-quinone oxidoreductase subunit C.